Consider the following 712-residue polypeptide: Potassium transporter 1 (712 aa).

Over 1-19 (MNQSPSLIEQGISQQHLKT) the chain is Cytoplasmic. A helical membrane pass occupies residues 20 to 40 (LSCANVLTLAYQSLGVIYGDL). The Extracellular portion of the chain corresponds to 41 to 67 (STSPLYVYKTTFSGKLSLHEDDEEIFG). Residues 68–88 (VFSFIFWTFTLIALFKYVFIV) form a helical membrane-spanning segment. Over 89-154 (LSADDNGEGG…FFEKHPKSQK (66 aa)) the chain is Cytoplasmic. The helical transmembrane segment at 155–175 (CLLLFVLLGTCMAIGDSVLTP) threads the bilayer. At 176–189 (TISVLSAVSGVKLK) the chain is on the extracellular side. A helical membrane pass occupies residues 190–210 (IPNLHENYVVIIACIILVAIF). The Cytoplasmic segment spans residues 211 to 219 (SVQRYGTHR). Residues 220-240 (VAFIFAPISTAWLLSISSIGV) form a helical membrane-spanning segment. The Extracellular portion of the chain corresponds to 241–267 (YNTIKWNPRIVSALSPVYMYKFLRSTG). A helical membrane pass occupies residues 268–288 (VEGWVSLGGVVLSITGVETMF). Over 289–300 (ADLGHFSSLSIK) the chain is Cytoplasmic. The chain crosses the membrane as a helical span at residues 301 to 321 (VAFSFFVYPCLILAYMGEAAF). Topologically, residues 322 to 340 (LSKHHEDIQQSFYKAIPEP) are extracellular. The helical transmembrane segment at 341-361 (VFWPVFIVATFAAVVGSQAVI) threads the bilayer. Over 362-392 (SATFSIISQCCALDCFPRVKIIHTSSKIHGQ) the chain is Cytoplasmic. A helical transmembrane segment spans residues 393 to 413 (IYIPEVNWMLMCLCLAVTIGL). Over 414-424 (RDTNMMGHAYG) the chain is Extracellular. A helical transmembrane segment spans residues 425–445 (LAVTSVMLVTTCLMTLVMTIV). Topologically, residues 446–449 (WKQR) are cytoplasmic. A helical transmembrane segment spans residues 450-470 (IITVLAFVVFFGSIELLYFSS). Over 471 to 474 (CVYK) the chain is Extracellular. The chain crosses the membrane as a helical span at residues 475-495 (VPEGGWIPILLSLTFMAVMYI). Residues 496–712 (WNYGTTKKHE…LLEVGMVYYV (217 aa)) are Cytoplasmic-facing.

This sequence belongs to the HAK/KUP transporter (TC 2.A.72.3) family. Detected in the whole mature plant but preferentially expressed in roots and stems, and in potassium-starved plants.

The protein localises to the cell membrane. High-affinity potassium transporter that could play a major role in the uptake of potassium from the rhizosphere. May act as a low-affinity potassium transporter under high potassium concentrations. Could also transport rubidium. This chain is Potassium transporter 1 (POT1), found in Arabidopsis thaliana (Mouse-ear cress).